Reading from the N-terminus, the 127-residue chain is UPF0166 protein PH1503 (127 aa).

Belongs to the UPF0166 family.

This chain is UPF0166 protein PH1503, found in Pyrococcus horikoshii (strain ATCC 700860 / DSM 12428 / JCM 9974 / NBRC 100139 / OT-3).